The sequence spans 418 residues: Gamma-glutamyl phosphate reductase (418 aa).

Belongs to the gamma-glutamyl phosphate reductase family.

It is found in the cytoplasm. The catalysed reaction is L-glutamate 5-semialdehyde + phosphate + NADP(+) = L-glutamyl 5-phosphate + NADPH + H(+). Its pathway is amino-acid biosynthesis; L-proline biosynthesis; L-glutamate 5-semialdehyde from L-glutamate: step 2/2. Functionally, catalyzes the NADPH-dependent reduction of L-glutamate 5-phosphate into L-glutamate 5-semialdehyde and phosphate. The product spontaneously undergoes cyclization to form 1-pyrroline-5-carboxylate. The sequence is that of Gamma-glutamyl phosphate reductase from Marinobacter nauticus (strain ATCC 700491 / DSM 11845 / VT8) (Marinobacter aquaeolei).